The chain runs to 161 residues: Anaerobic nitrite reductase GLB1 (161 aa).

A Globin domain is found at 9–157 (VFTEEQEALV…LVAAIKSEMK (149 aa)). The Homodimerization motif lies at 42–46 (EIAPS). Residues Ser-52, Lys-66, His-70, Arg-100, and His-105 each coordinate heme b. A Homodimerization motif is present at residues 112-123 (NEHFETRFALLE).

Belongs to the plant globin family. Homodimer. Heme b is required as a cofactor. As to expression, root specific.

The protein localises to the cytoplasm. The protein resides in the nucleus. It carries out the reaction Fe(III)-heme b-[protein] + nitric oxide + H2O = Fe(II)-heme b-[protein] + nitrite + 2 H(+). Its function is as follows. Phytoglobin that reduces nitrite to nitric oxide (NO) under anoxic conditions (e.g. during flooding or in waterlogged soil) and upon root nodulation. Required for general plant development and during nodulation, especially for the onset of symbiosis. Monitors nitric oxide (NO) levels during early phase of the nitrogen-fixing symbiosis and buffers oxygen in functioning nodules. May not function as an oxygen storage or transport protein. Has an unusually high affinity for O(2) through a hexacoordinate heme iron because of a very low dissociation constant. The protein is Anaerobic nitrite reductase GLB1 (GLB1) of Trema tomentosum (Peach-leaf poison-bush).